A 224-amino-acid polypeptide reads, in one-letter code: CASP-like protein 3A1 (224 aa).

At 1-59 (MMMNGQKLAPAAEVAVQLPESKVAADNISGTMSGPLVGASGGGTTAAMRPFGRKAEVMH) the chain is on the cytoplasmic side. A helical membrane pass occupies residues 60–80 (VLLRLLCIITSVAALSFMFTA). The Extracellular segment spans residues 81 to 106 (QQSSTISIYGFMLPVQSKWSFSHSFE). A helical membrane pass occupies residues 107–127 (YLVGVSAAVAAHSLLQLLISM). Topologically, residues 128–142 (SRLLRKSPVIPSRSH) are cytoplasmic. Residues 143 to 163 (AWLIFAGDQVFAYAMISAGAA) traverse the membrane as a helical segment. Residues 164–192 (ASGVTNLNRTGIQHTALPNFCKPLQSFCD) lie on the Extracellular side of the membrane. An N-linked (GlcNAc...) asparagine glycan is attached at Asn171. The chain crosses the membrane as a helical span at residues 193 to 213 (HVAVSIFFTFTSCFLLAASAV). Residues 214 to 224 (QEVIWLSRSKY) lie on the Cytoplasmic side of the membrane.

Belongs to the Casparian strip membrane proteins (CASP) family. Homodimer and heterodimers.

It localises to the cell membrane. This is CASP-like protein 3A1 from Populus trichocarpa (Western balsam poplar).